The sequence spans 521 residues: DEAD-box ATP-dependent RNA helicase 12 (521 aa).

Positions Met-1–Thr-97 are disordered. Residues Thr-13 to Gly-50 show a composition bias toward gly residues. The segment covering Arg-51–Gln-89 has biased composition (low complexity). The short motif at Asn-147–Glu-175 is the Q motif element. One can recognise a Helicase ATP-binding domain in the interval Ile-178–Ile-348. An ATP-binding site is contributed by Ala-191 to Thr-198. The short motif at Asp-296–Asp-299 is the DEAD box element. The Helicase C-terminal domain occupies Gly-358 to Val-518.

Belongs to the DEAD box helicase family. DDX6/DHH1 subfamily.

It is found in the cytoplasm. The protein resides in the P-body. It carries out the reaction ATP + H2O = ADP + phosphate + H(+). In terms of biological role, ATP-dependent RNA helicase involved in mRNA turnover, and more specifically in mRNA decapping. This is DEAD-box ATP-dependent RNA helicase 12 from Oryza sativa subsp. japonica (Rice).